Consider the following 213-residue polypeptide: Chloramphenicol acetyltransferase 2 (213 aa).

His-189 functions as the Proton acceptor in the catalytic mechanism.

Belongs to the chloramphenicol acetyltransferase family. As to quaternary structure, homotrimer.

It catalyses the reaction chloramphenicol + acetyl-CoA = chloramphenicol 3-acetate + CoA. Functionally, this enzyme is an effector of chloramphenicol resistance in bacteria. In Escherichia coli, this protein is Chloramphenicol acetyltransferase 2 (cmlA).